The following is a 912-amino-acid chain: Bifunctional uridylyltransferase/uridylyl-removing enzyme (912 aa).

A uridylyltransferase region spans residues 1–369 (MLPRIANQRA…FFASLRSRRK (369 aa)). Residues 370-722 (KVGPFFIEGG…AHWYPARGAT (353 aa)) are uridylyl-removing. The region spanning 486 to 608 (VDEHTIRAIG…VQSQERLRLL (123 aa)) is the HD domain. 2 ACT domains span residues 723-802 (LVTV…LVPQ) and 834-912 (VIEV…KDAA).

This sequence belongs to the GlnD family. Mg(2+) serves as cofactor.

The enzyme catalyses [protein-PII]-L-tyrosine + UTP = [protein-PII]-uridylyl-L-tyrosine + diphosphate. It carries out the reaction [protein-PII]-uridylyl-L-tyrosine + H2O = [protein-PII]-L-tyrosine + UMP + H(+). Uridylyltransferase (UTase) activity is inhibited by glutamine, while glutamine activates uridylyl-removing (UR) activity. Modifies, by uridylylation and deuridylylation, the PII regulatory proteins (GlnB and homologs), in response to the nitrogen status of the cell that GlnD senses through the glutamine level. Under low glutamine levels, catalyzes the conversion of the PII proteins and UTP to PII-UMP and PPi, while under higher glutamine levels, GlnD hydrolyzes PII-UMP to PII and UMP (deuridylylation). Thus, controls uridylylation state and activity of the PII proteins, and plays an important role in the regulation of nitrogen assimilation and metabolism. In Novosphingobium aromaticivorans (strain ATCC 700278 / DSM 12444 / CCUG 56034 / CIP 105152 / NBRC 16084 / F199), this protein is Bifunctional uridylyltransferase/uridylyl-removing enzyme.